We begin with the raw amino-acid sequence, 228 residues long: L-ribulose-5-phosphate 4-epimerase UlaF (228 aa).

Substrate is bound by residues 26–27 (GN), 43–44 (SG), and 72–73 (SS). 3 residues coordinate Zn(2+): Asp-74, His-93, and His-95. The active-site Proton donor/acceptor is the Asp-118. His-167 lines the Zn(2+) pocket. Tyr-225 serves as the catalytic Proton donor/acceptor.

Belongs to the aldolase class II family. AraD/FucA subfamily. Zn(2+) is required as a cofactor.

The enzyme catalyses L-ribulose 5-phosphate = D-xylulose 5-phosphate. It functions in the pathway cofactor degradation; L-ascorbate degradation; D-xylulose 5-phosphate from L-ascorbate: step 4/4. Catalyzes the isomerization of L-ribulose 5-phosphate to D-xylulose 5-phosphate. Is involved in the anaerobic L-ascorbate utilization. This is L-ribulose-5-phosphate 4-epimerase UlaF from Shigella boydii serotype 18 (strain CDC 3083-94 / BS512).